Here is a 294-residue protein sequence, read N- to C-terminus: Elongation factor Ts (294 aa).

The segment at 80-83 is involved in Mg(2+) ion dislocation from EF-Tu; that stretch reads TDFV.

This sequence belongs to the EF-Ts family.

The protein resides in the cytoplasm. In terms of biological role, associates with the EF-Tu.GDP complex and induces the exchange of GDP to GTP. It remains bound to the aminoacyl-tRNA.EF-Tu.GTP complex up to the GTP hydrolysis stage on the ribosome. This Listeria monocytogenes serotype 4b (strain CLIP80459) protein is Elongation factor Ts.